An 88-amino-acid polypeptide reads, in one-letter code: uncharacterized protein (88 aa).

Positions 1 to 25 (MRAAFWVGCAALLLSACSSEPVQQA) are cleaved as a signal peptide.

This is an uncharacterized protein from Escherichia coli O6:H1 (strain CFT073 / ATCC 700928 / UPEC).